Consider the following 268-residue polypeptide: 14-3-3-like protein GF14 upsilon (268 aa).

A phosphoserine mark is found at serine 69 and serine 192. Residue threonine 213 is modified to Phosphothreonine. Residues 243 to 268 are disordered; sequence EAGDDIKEAPKEVQKVDEQAQPPPSQ. Over residues 246–260 the composition is skewed to basic and acidic residues; the sequence is DDIKEAPKEVQKVDE. A Phosphoserine modification is found at serine 267.

The protein belongs to the 14-3-3 family. Interacts with EDE1. Interacts with DREB1A and DREB1B in the nucleus. Interacts with CINV1.

The protein localises to the cytoplasm. The protein resides in the nucleus. Is associated with a DNA binding complex that binds to the G box, a well-characterized cis-acting DNA regulatory element found in plant genes. May be involved in cell cycle regulation by binding to soluble EDE1 and sequestering it in an inactive form during the early stages of mitosis. The polypeptide is 14-3-3-like protein GF14 upsilon (GRF5) (Arabidopsis thaliana (Mouse-ear cress)).